The primary structure comprises 484 residues: Diaminopimelate decarboxylase 1, chloroplastic (484 aa).

Over residues 1 to 28 (MAAATQFLSQPSSLNPHQLKNQTSQRSR) the composition is skewed to polar residues. A disordered region spans residues 1–30 (MAAATQFLSQPSSLNPHQLKNQTSQRSRSI). A chloroplast-targeting transit peptide spans 1-49 (MAAATQFLSQPSSLNPHQLKNQTSQRSRSIPVLSLKSTLKPLKRLSVKA). The residue at position 50 (alanine 50) is an N-acetylalanine. An N6-(pyridoxal phosphate)lysine modification is found at lysine 125. Pyridoxal 5'-phosphate is bound by residues glycine 304 and 340–343 (EPGR). Substrate-binding residues include arginine 343, arginine 379, and tyrosine 383. Cysteine 411 serves as the catalytic Proton donor. Positions 412 and 440 each coordinate substrate. Tyrosine 440 provides a ligand contact to pyridoxal 5'-phosphate.

Belongs to the Orn/Lys/Arg decarboxylase class-II family. LysA subfamily. Homodimer. The cofactor is pyridoxal 5'-phosphate.

It is found in the plastid. Its subcellular location is the chloroplast. The catalysed reaction is meso-2,6-diaminopimelate + H(+) = L-lysine + CO2. Its pathway is amino-acid biosynthesis; L-lysine biosynthesis via DAP pathway; L-lysine from DL-2,6-diaminopimelate: step 1/1. Functionally, specifically catalyzes the decarboxylation of meso-diaminopimelate (meso-DAP) to L-lysine. In Arabidopsis thaliana (Mouse-ear cress), this protein is Diaminopimelate decarboxylase 1, chloroplastic (LYSA1).